A 123-amino-acid chain; its full sequence is Large ribosomal subunit protein bL12 (123 aa).

It belongs to the bacterial ribosomal protein bL12 family. As to quaternary structure, homodimer. Part of the ribosomal stalk of the 50S ribosomal subunit. Forms a multimeric L10(L12)X complex, where L10 forms an elongated spine to which 2 to 4 L12 dimers bind in a sequential fashion. Binds GTP-bound translation factors.

Its function is as follows. Forms part of the ribosomal stalk which helps the ribosome interact with GTP-bound translation factors. Is thus essential for accurate translation. This is Large ribosomal subunit protein bL12 from Mycoplasmopsis agalactiae (strain NCTC 10123 / CIP 59.7 / PG2) (Mycoplasma agalactiae).